We begin with the raw amino-acid sequence, 543 residues long: Chaperonin GroEL 2 (543 aa).

ATP-binding positions include 29-32 (TLGP), 86-90 (DGTTT), Gly-413, 479-481 (NAA), and Asp-495.

It belongs to the chaperonin (HSP60) family. In terms of assembly, forms a cylinder of 14 subunits composed of two heptameric rings stacked back-to-back. Interacts with the co-chaperonin GroES.

It localises to the cytoplasm. The catalysed reaction is ATP + H2O + a folded polypeptide = ADP + phosphate + an unfolded polypeptide.. In terms of biological role, together with its co-chaperonin GroES, plays an essential role in assisting protein folding. The GroEL-GroES system forms a nano-cage that allows encapsulation of the non-native substrate proteins and provides a physical environment optimized to promote and accelerate protein folding. The sequence is that of Chaperonin GroEL 2 from Prochlorococcus marinus (strain NATL1A).